A 149-amino-acid chain; its full sequence is Large ribosomal subunit protein bL9 (149 aa).

This sequence belongs to the bacterial ribosomal protein bL9 family.

In terms of biological role, binds to the 23S rRNA. The sequence is that of Large ribosomal subunit protein bL9 from Actinobacillus pleuropneumoniae serotype 3 (strain JL03).